The sequence spans 302 residues: 2-phosphoglycerate kinase (302 aa).

The ATP-cone domain occupies 2 to 89 (IKVIERDGKV…FWRRFRKLKI (88 aa)).

This sequence belongs to the 2-phosphoglycerate kinase family. A divalent metal cation serves as cofactor.

It catalyses the reaction (2R)-2-phosphoglycerate + ATP = (2R)-2,3-bisphosphoglycerate + ADP + H(+). The protein operates within thermoadapter biosynthesis; cyclic 2,3-diphosphoglycerate biosynthesis; cyclic 2,3-diphosphoglycerate from 2-phospho-D-glycerate: step 1/2. Functionally, catalyzes the phosphorylation of 2-phosphoglycerate to 2,3-diphosphoglycerate. Involved in the biosynthesis of cyclic 2,3-bisphosphoglycerate, a thermoprotectant. The chain is 2-phosphoglycerate kinase from Pyrococcus furiosus (strain ATCC 43587 / DSM 3638 / JCM 8422 / Vc1).